Here is a 518-residue protein sequence, read N- to C-terminus: Ent-cassadiene hydroxylase (518 aa).

The helical transmembrane segment at 6-26 threads the bilayer; that stretch reads LILALGLSVLFVLLSKLVSSA. A heme-binding site is contributed by Cys451.

It belongs to the cytochrome P450 family. Heme is required as a cofactor.

It localises to the membrane. It catalyses the reaction ent-cassa-12,15-diene + 3 reduced [NADPH--hemoprotein reductase] + 3 O2 = ent-3beta-hydroxycassa-12,15-dien-2-one + 3 oxidized [NADPH--hemoprotein reductase] + 4 H2O + 3 H(+). Enzyme of the diterpenoid metabolism involved in the biosynthesis of antibacterial oryzalides such as phytocassane. Catalyzes the hydroxylation of ent-cassa-12,15-diene to form ent-3beta-hydroxycassa-12,15-dien-2-one. In Oryza sativa subsp. japonica (Rice), this protein is Ent-cassadiene hydroxylase (CYP71Z7).